The primary structure comprises 394 residues: DNA replication and repair protein RecF (394 aa).

Residue 30 to 37 coordinates ATP; that stretch reads GRNGFGKT.

The protein belongs to the RecF family.

The protein localises to the cytoplasm. The RecF protein is involved in DNA metabolism; it is required for DNA replication and normal SOS inducibility. RecF binds preferentially to single-stranded, linear DNA. It also seems to bind ATP. The polypeptide is DNA replication and repair protein RecF (Corynebacterium glutamicum (strain R)).